The primary structure comprises 207 residues: Thiamine-phosphate synthase (207 aa).

Residues 41 to 45 (QLRLK) and Asn73 each bind 4-amino-2-methyl-5-(diphosphooxymethyl)pyrimidine. Residues Asp74 and Asp93 each coordinate Mg(2+). Residue Thr111 participates in 4-amino-2-methyl-5-(diphosphooxymethyl)pyrimidine binding. 138–140 (TKT) contributes to the 2-[(2R,5Z)-2-carboxy-4-methylthiazol-5(2H)-ylidene]ethyl phosphate binding site. Position 141 (Lys141) interacts with 4-amino-2-methyl-5-(diphosphooxymethyl)pyrimidine. Residue Gly168 participates in 2-[(2R,5Z)-2-carboxy-4-methylthiazol-5(2H)-ylidene]ethyl phosphate binding.

The protein belongs to the thiamine-phosphate synthase family. It depends on Mg(2+) as a cofactor.

The catalysed reaction is 2-[(2R,5Z)-2-carboxy-4-methylthiazol-5(2H)-ylidene]ethyl phosphate + 4-amino-2-methyl-5-(diphosphooxymethyl)pyrimidine + 2 H(+) = thiamine phosphate + CO2 + diphosphate. It carries out the reaction 2-(2-carboxy-4-methylthiazol-5-yl)ethyl phosphate + 4-amino-2-methyl-5-(diphosphooxymethyl)pyrimidine + 2 H(+) = thiamine phosphate + CO2 + diphosphate. The enzyme catalyses 4-methyl-5-(2-phosphooxyethyl)-thiazole + 4-amino-2-methyl-5-(diphosphooxymethyl)pyrimidine + H(+) = thiamine phosphate + diphosphate. Its pathway is cofactor biosynthesis; thiamine diphosphate biosynthesis; thiamine phosphate from 4-amino-2-methyl-5-diphosphomethylpyrimidine and 4-methyl-5-(2-phosphoethyl)-thiazole: step 1/1. In terms of biological role, condenses 4-methyl-5-(beta-hydroxyethyl)thiazole monophosphate (THZ-P) and 2-methyl-4-amino-5-hydroxymethyl pyrimidine pyrophosphate (HMP-PP) to form thiamine monophosphate (TMP). In Pelagibacter ubique (strain HTCC1062), this protein is Thiamine-phosphate synthase.